The following is a 190-amino-acid chain: Crossover junction endodeoxyribonuclease RuvC (190 aa).

Residues Asp8, Glu67, and Asp139 contribute to the active site. Mg(2+)-binding residues include Asp8, Glu67, and Asp139.

Belongs to the RuvC family. As to quaternary structure, homodimer which binds Holliday junction (HJ) DNA. The HJ becomes 2-fold symmetrical on binding to RuvC with unstacked arms; it has a different conformation from HJ DNA in complex with RuvA. In the full resolvosome a probable DNA-RuvA(4)-RuvB(12)-RuvC(2) complex forms which resolves the HJ. It depends on Mg(2+) as a cofactor.

The protein localises to the cytoplasm. The enzyme catalyses Endonucleolytic cleavage at a junction such as a reciprocal single-stranded crossover between two homologous DNA duplexes (Holliday junction).. In terms of biological role, the RuvA-RuvB-RuvC complex processes Holliday junction (HJ) DNA during genetic recombination and DNA repair. Endonuclease that resolves HJ intermediates. Cleaves cruciform DNA by making single-stranded nicks across the HJ at symmetrical positions within the homologous arms, yielding a 5'-phosphate and a 3'-hydroxyl group; requires a central core of homology in the junction. The consensus cleavage sequence is 5'-(A/T)TT(C/G)-3'. Cleavage occurs on the 3'-side of the TT dinucleotide at the point of strand exchange. HJ branch migration catalyzed by RuvA-RuvB allows RuvC to scan DNA until it finds its consensus sequence, where it cleaves and resolves the cruciform DNA. This chain is Crossover junction endodeoxyribonuclease RuvC, found in Haemophilus influenzae (strain PittGG).